The following is a 122-amino-acid chain: Large ribosomal subunit protein uL14c (122 aa).

Belongs to the universal ribosomal protein uL14 family. As to quaternary structure, part of the 50S ribosomal subunit.

The protein localises to the plastid. It localises to the chloroplast. Binds to 23S rRNA. The polypeptide is Large ribosomal subunit protein uL14c (Phaseolus vulgaris (Kidney bean)).